A 488-amino-acid chain; its full sequence is Cytochrome P450 monooxygenase orf2 (488 aa).

A helical transmembrane segment spans residues 7 to 27; the sequence is LPGIFLPLAGCVLALSLTTIV. Cys432 serves as a coordination point for heme.

This sequence belongs to the cytochrome P450 family. The cofactor is heme.

Its subcellular location is the membrane. The protein operates within secondary metabolite biosynthesis. In terms of biological role, cytochrome P450 monooxygenase; part of the gene cluster that mediates the biosynthesis of nigerpyrone and its derivatives carbonarone A and pestalamide A. The biosynthesis pathway begins with the polyketide assembly by epaA to form phenylacetyl triketide precursor from successive condensation of two malonyl-CoA, presumably with one phenylacetyl-CoA starter unit produced by the phenylacetyl-CoA ligase epaB. For the nigerpyrone biosynthesis, the reactive polyketide chain is released as an aldehyde through the R-domain. A nonenzymatic cyclization and dehydration may create nigerpyrone. For the biosynthesis of carbonarone A and pestalamide A, an extra methyl group is added through the C-methyltransferase domain. Several further steps involving the dehydrogenase orf1, the cytochrome P450 monooxygenase orf2 and the FAD-dependent monooxygenase orf3 are required to form a carbonarone A precursor which is converted to carbonarone A via cyclization. The O-acetyltransferase epaC could catalyze the transfer of 2-methylsuccinyl-CoA, a common intermediate in the ethylmalonyl-CoA pathway, to generate the final product pestalamide A. In Aspergillus niger (strain ATCC MYA-4892 / CBS 513.88 / FGSC A1513), this protein is Cytochrome P450 monooxygenase orf2.